Consider the following 325-residue polypeptide: Replication factor C small subunit (325 aa).

An ATP-binding site is contributed by 44–51 (GPPGTGKT).

Belongs to the activator 1 small subunits family. RfcS subfamily. Heteromultimer composed of small subunits (RfcS) and large subunits (RfcL).

Its function is as follows. Part of the RFC clamp loader complex which loads the PCNA sliding clamp onto DNA. This chain is Replication factor C small subunit, found in Thermofilum pendens (strain DSM 2475 / Hrk 5).